We begin with the raw amino-acid sequence, 492 residues long: 2-succinylbenzoate--CoA ligase (492 aa).

The protein belongs to the ATP-dependent AMP-binding enzyme family. MenE subfamily.

The enzyme catalyses 2-succinylbenzoate + ATP + CoA = 2-succinylbenzoyl-CoA + AMP + diphosphate. It participates in quinol/quinone metabolism; 1,4-dihydroxy-2-naphthoate biosynthesis; 1,4-dihydroxy-2-naphthoate from chorismate: step 5/7. It functions in the pathway quinol/quinone metabolism; menaquinone biosynthesis. In terms of biological role, converts 2-succinylbenzoate (OSB) to 2-succinylbenzoyl-CoA (OSB-CoA). The polypeptide is 2-succinylbenzoate--CoA ligase (Geobacillus sp. (strain WCH70)).